Consider the following 204-residue polypeptide: Urease accessory protein UreG (204 aa).

11–18 (GPVGAGKT) is a GTP binding site.

This sequence belongs to the SIMIBI class G3E GTPase family. UreG subfamily. As to quaternary structure, homodimer. UreD, UreF and UreG form a complex that acts as a GTP-hydrolysis-dependent molecular chaperone, activating the urease apoprotein by helping to assemble the nickel containing metallocenter of UreC. The UreE protein probably delivers the nickel.

The protein resides in the cytoplasm. In terms of biological role, facilitates the functional incorporation of the urease nickel metallocenter. This process requires GTP hydrolysis, probably effectuated by UreG. The protein is Urease accessory protein UreG of Staphylococcus aureus (strain Mu3 / ATCC 700698).